Reading from the N-terminus, the 309-residue chain is Taste receptor type 2 member 46 (309 aa).

A topological domain (extracellular) is located at residue Met1. A helical membrane pass occupies residues 2-22 (ITFLPIIFSILIVVTFVIGNF). Residues 23–46 (ANGFIALVNSIEWFKRQKISFADQ) lie on the Cytoplasmic side of the membrane. A helical transmembrane segment spans residues 47-67 (ILTALAVSRVGLLWVLVLNWY). The Extracellular segment spans residues 68–86 (ATELNPAFNSIEVRITAYN). A helical transmembrane segment spans residues 87-107 (VWAVINHFSNWLATSLSIFYL). Residues 108–126 (LKIANFSNLIFLHLKRRVK) are Cytoplasmic-facing. A helical membrane pass occupies residues 127–147 (SVVLVILLGPLLFLVCHLFVI). At 148–178 (NMNQIIWTKEYEGNMTWKIKLRSAMYLSNTT) the chain is on the extracellular side. Residues Asn161 and Asn176 are each glycosylated (N-linked (GlcNAc...) asparagine). Residues 179 to 199 (VTILANLVPFTLTLISFLLLI) form a helical membrane-spanning segment. The Cytoplasmic portion of the chain corresponds to 200-229 (CSLCKHLKKMQLHGKGSQDPSMKVHIKALQ). The chain crosses the membrane as a helical span at residues 230-250 (TVTSFLLLCAIYFLSIIMSVW). Residues 251–259 (SFESLENKP) lie on the Extracellular side of the membrane. A helical membrane pass occupies residues 260–280 (VFMFCEAIAFSYPSTHPFILI). The Cytoplasmic segment spans residues 281–309 (WGNKKLKQTFLSVLWHVRYWVKGEKPSSS).

It belongs to the G-protein coupled receptor T2R family. In terms of tissue distribution, expressed in subsets of taste receptor cells of the tongue and exclusively in gustducin-positive cells. Expressed on ciliated airway epithelium.

The protein resides in the membrane. The protein localises to the cell projection. It localises to the cilium membrane. Receptor that may play a role in the perception of bitterness and is gustducin-linked. May play a role in sensing the chemical composition of the gastrointestinal content. The activity of this receptor may stimulate alpha gustducin, mediate PLC-beta-2 activation and lead to the gating of TRPM5. In airway epithelial cells, binding of bitter compounds increases the intracellular calcium ion concentration and stimulates ciliary beat frequency. The protein is Taste receptor type 2 member 46 (TAS2R46) of Homo sapiens (Human).